The sequence spans 294 residues: MQARFHPIWVQLPSKLQDALLPYAGNDDFPAMLTAEQAKSIKKACGFDDNTLAVALLPLAAASSLTPISHFNVGAIARGESGNLYFGANMEFAGVPLQQTIHAEQCAITHAWLLGEKRLASVTVNYSPCGHCRQFMNELNSGTQLEIHLPKQASSTLDHYLPDSFGPNDLGITTLLMDPVNHGYKLETTDKLVLTALDAANQSYAPYSNSYSGTALLGKDGIIYPGRYAENAAFNPSLPPLQAALILMNISGGDCLAIERAVLVEGKHSDLSQRSATQSILAALGCSKFDYYTF.

CMP/dCMP-type deaminase domains lie at 48–168 and 187–294; these read DDNT…FGPN and ETTD…YYTF. 89–91 is a substrate binding site; it reads NME. Zn(2+) is bound at residue His102. The active-site Proton donor is Glu104. Zn(2+) contacts are provided by Cys129 and Cys132.

This sequence belongs to the cytidine and deoxycytidylate deaminase family. In terms of assembly, homodimer. Zn(2+) serves as cofactor.

It catalyses the reaction cytidine + H2O + H(+) = uridine + NH4(+). The enzyme catalyses 2'-deoxycytidine + H2O + H(+) = 2'-deoxyuridine + NH4(+). In terms of biological role, this enzyme scavenges exogenous and endogenous cytidine and 2'-deoxycytidine for UMP synthesis. The sequence is that of Cytidine deaminase from Photorhabdus laumondii subsp. laumondii (strain DSM 15139 / CIP 105565 / TT01) (Photorhabdus luminescens subsp. laumondii).